Here is a 181-residue protein sequence, read N- to C-terminus: Large ribosomal subunit protein uL6 (181 aa).

This sequence belongs to the universal ribosomal protein uL6 family. As to quaternary structure, part of the 50S ribosomal subunit.

In terms of biological role, this protein binds to the 23S rRNA, and is important in its secondary structure. It is located near the subunit interface in the base of the L7/L12 stalk, and near the tRNA binding site of the peptidyltransferase center. This Desulforudis audaxviator (strain MP104C) protein is Large ribosomal subunit protein uL6.